We begin with the raw amino-acid sequence, 325 residues long: MQVVDEKTILELENERFDESSQFKTPEKLIVEASDMTAFRQSKAYYRIFDFLQRLNIASVGVNDYHVEYSTRVEKLVRILCRVKEITKTVPPASGRHRFGNPAFRIWHEKLRDSASQIMDIIIPDSLSKAKVELLDYFLGSFGNSQRIDFGTGHELNFLGFIKGLDLLGLLDAADYKAIALYITHVYLEVCRELVQTYRLEPAGSHGVWGLDDHFFIPYIFGSAQLADKASSSIIKPDAILNKKIVDEKANSNLYFSAIKFINVMKKGPFYEHSPILYDITAVPIWSKVNQGLIKMYDVEVLSKYPVVQHFHFGNLFPFNPLVAK.

It belongs to the PTPA-type PPIase family.

The protein localises to the cytoplasm. It is found in the nucleus. The catalysed reaction is [protein]-peptidylproline (omega=180) = [protein]-peptidylproline (omega=0). Functionally, PPIases accelerate the folding of proteins. It catalyzes the cis-trans isomerization of proline imidic peptide bonds in oligopeptides. Acts as a regulatory subunit for PP2A-like phosphatases modulating their activity or substrate specificity, probably by inducing a conformational change in the catalytic subunit, a direct target of the PPIase. Can reactivate inactive phosphatase PP2A-phosphatase methylesterase complexes (PP2Ai) in presence of ATP and Mg(2+) by dissociating the inactive form from the complex. The chain is Serine/threonine-protein phosphatase 2A activator 1 (rrd1) from Schizosaccharomyces pombe (strain 972 / ATCC 24843) (Fission yeast).